Consider the following 247-residue polypeptide: STING ER exit protein (247 aa).

The residue at position 127 (S127) is a Phosphoserine. Residues 195 to 216 (EAREIADSYANNARIIEKQLQR) adopt a coiled-coil conformation. The segment at 215-247 (QRKGGKLSDVGIKTKTEDAPPPQKKQRGTLLER) is disordered.

It belongs to the STEEP1 family.

In terms of biological role, molecular adapter that stimulates membrane curvature formation and subsequent endoplasmic reticulum exit site (ERES) establishment by recruiting PI3K complex I, leading to COPII vesicle-mediated transport. The polypeptide is STING ER exit protein (Drosophila melanogaster (Fruit fly)).